The following is a 757-amino-acid chain: Xaa-Pro dipeptidyl-peptidase (757 aa).

Catalysis depends on charge relay system residues S348, D468, and H498.

It belongs to the peptidase S15 family. As to quaternary structure, homodimer.

The protein localises to the cytoplasm. It catalyses the reaction Hydrolyzes Xaa-Pro-|- bonds to release unblocked, N-terminal dipeptides from substrates including Ala-Pro-|-p-nitroanilide and (sequentially) Tyr-Pro-|-Phe-Pro-|-Gly-Pro-|-Ile.. Functionally, removes N-terminal dipeptides sequentially from polypeptides having unsubstituted N-termini provided that the penultimate residue is proline. This Streptococcus pneumoniae serotype 19F (strain G54) protein is Xaa-Pro dipeptidyl-peptidase.